The chain runs to 243 residues: Venom nerve growth factor (243 aa).

The first 18 residues, M1–A18, serve as a signal peptide directing secretion. Residues A19–R125 constitute a propeptide that is removed on maturation. Residues G47 to D66 are compositionally biased toward basic and acidic residues. A disordered region spans residues G47–L69. Disulfide bonds link C139/C204, C182/C232, and C192/C234. N148 is a glycosylation site (N-linked (GlcNAc...) asparagine).

Belongs to the NGF-beta family. Homodimer; non-covalently linked. Expressed by the venom gland.

It is found in the secreted. Functionally, nerve growth factor is important for the development and maintenance of the sympathetic and sensory nervous systems. It stimulates division and differentiation of sympathetic and embryonic sensory neurons as well as basal forebrain cholinergic neurons in the brain. Its relevance in the snake venom is not clear. However, it has been shown to inhibit metalloproteinase-dependent proteolysis of platelet glycoprotein Ib alpha, suggesting a metalloproteinase inhibition to prevent metalloprotease autodigestion and/or protection against prey proteases. Binds a lipid between the two protein chains in the homodimer. The lipid-bound form promotes histamine relase from mouse mast cells, contrary to the lipid-free form. This is Venom nerve growth factor from Oxyuranus scutellatus scutellatus (Australian taipan).